A 144-amino-acid polypeptide reads, in one-letter code: NADH-ubiquinone oxidoreductase chain 6 (144 aa).

A run of 5 helical transmembrane segments spans residues 1–21, 25–45, 46–66, 75–95, and 108–128; these read MIKL…MNID, SSFF…MSMH, IWFS…ILVY, VVKS…FSPV, and FYYS…LFFM.

The protein belongs to the complex I subunit 6 family.

It is found in the mitochondrion membrane. The enzyme catalyses a ubiquinone + NADH + 5 H(+)(in) = a ubiquinol + NAD(+) + 4 H(+)(out). In terms of biological role, core subunit of the mitochondrial membrane respiratory chain NADH dehydrogenase (Complex I) that is believed to belong to the minimal assembly required for catalysis. Complex I functions in the transfer of electrons from NADH to the respiratory chain. The immediate electron acceptor for the enzyme is believed to be ubiquinone. This chain is NADH-ubiquinone oxidoreductase chain 6 (nd6), found in Caenorhabditis briggsae.